Here is a 363-residue protein sequence, read N- to C-terminus: MKHVLLYCRSGFEKECAGEIQDKATQLEVFGFPRLKNNTGFVLFECYQAGEADKLIKEIDFQSLIFARQMLAVAVEIKDLPTDDRISPILEALSEKEGFPRCGDIRIETPDTNEAKELLKFCRKFTVPMRQAMRGKGLMTAKDNAKKPVLHLCFIAPGHCFVGYSYPTNNSQFFMGIPRLKFPSDAPSRSTLKLEEAFHVFIPRDEWDERLAPGMWGVDLGACPGGWTYQLVKRSMFVHCVDNGMMADSLMETGQIKHHMVDGFKFEPDRKNVTWIICDMVEKPARVAHLMGEWIIKGWAKEALFNLKLPMKGRYDEVLQDIENLKQFLIDNKVKFKMQAKHLYHDREEITVHIQSLSNISPY.

Residues S190, 223 to 226, D242, D262, and D279 contribute to the S-adenosyl-L-methionine site; that span reads CPGG. Catalysis depends on K308, which acts as the Proton acceptor.

Belongs to the class I-like SAM-binding methyltransferase superfamily. RNA methyltransferase RlmE family. RlmM subfamily. As to quaternary structure, monomer.

The protein resides in the cytoplasm. It catalyses the reaction cytidine(2498) in 23S rRNA + S-adenosyl-L-methionine = 2'-O-methylcytidine(2498) in 23S rRNA + S-adenosyl-L-homocysteine + H(+). Functionally, catalyzes the 2'-O-methylation at nucleotide C2498 in 23S rRNA. The chain is Ribosomal RNA large subunit methyltransferase M from Vibrio atlanticus (strain LGP32) (Vibrio splendidus (strain Mel32)).